A 306-amino-acid chain; its full sequence is Bifunctional protein FolD 1 (306 aa).

NADP(+) contacts are provided by residues 170–172, threonine 199, and valine 240; that span reads GRG. The interval 285 to 306 is disordered; it reads ARRTRSSRTPVRLPDSGAPAGR.

It belongs to the tetrahydrofolate dehydrogenase/cyclohydrolase family. As to quaternary structure, homodimer.

It carries out the reaction (6R)-5,10-methylene-5,6,7,8-tetrahydrofolate + NADP(+) = (6R)-5,10-methenyltetrahydrofolate + NADPH. The enzyme catalyses (6R)-5,10-methenyltetrahydrofolate + H2O = (6R)-10-formyltetrahydrofolate + H(+). Its pathway is one-carbon metabolism; tetrahydrofolate interconversion. Catalyzes the oxidation of 5,10-methylenetetrahydrofolate to 5,10-methenyltetrahydrofolate and then the hydrolysis of 5,10-methenyltetrahydrofolate to 10-formyltetrahydrofolate. This is Bifunctional protein FolD 1 from Salinispora tropica (strain ATCC BAA-916 / DSM 44818 / JCM 13857 / NBRC 105044 / CNB-440).